Reading from the N-terminus, the 262-residue chain is Indole-3-glycerol phosphate synthase (262 aa).

This sequence belongs to the TrpC family.

It carries out the reaction 1-(2-carboxyphenylamino)-1-deoxy-D-ribulose 5-phosphate + H(+) = (1S,2R)-1-C-(indol-3-yl)glycerol 3-phosphate + CO2 + H2O. It participates in amino-acid biosynthesis; L-tryptophan biosynthesis; L-tryptophan from chorismate: step 4/5. This chain is Indole-3-glycerol phosphate synthase, found in Clostridium kluyveri (strain NBRC 12016).